The primary structure comprises 286 residues: NH(3)-dependent NAD(+) synthetase (286 aa).

43–50 (GVSGGVDS) contributes to the ATP binding site. D49 serves as a coordination point for Mg(2+). R131 serves as a coordination point for deamido-NAD(+). T151 serves as a coordination point for ATP. E156 serves as a coordination point for Mg(2+). K164 and D171 together coordinate deamido-NAD(+). ATP is bound by residues K180 and S202. Positions 257 to 286 (HEASSHKRSPPASPDLGEIKKHYKQHAGKK) are disordered. 262–263 (HK) contributes to the deamido-NAD(+) binding site. Residues 277 to 286 (KHYKQHAGKK) are compositionally biased toward basic residues.

The protein belongs to the NAD synthetase family. Homodimer.

It carries out the reaction deamido-NAD(+) + NH4(+) + ATP = AMP + diphosphate + NAD(+) + H(+). Its pathway is cofactor biosynthesis; NAD(+) biosynthesis; NAD(+) from deamido-NAD(+) (ammonia route): step 1/1. Functionally, catalyzes the ATP-dependent amidation of deamido-NAD to form NAD. Uses ammonia as a nitrogen source. The chain is NH(3)-dependent NAD(+) synthetase from Aeropyrum pernix (strain ATCC 700893 / DSM 11879 / JCM 9820 / NBRC 100138 / K1).